Here is a 151-residue protein sequence, read N- to C-terminus: Putative pre-16S rRNA nuclease (151 aa).

Belongs to the YqgF nuclease family.

It localises to the cytoplasm. Its function is as follows. Could be a nuclease involved in processing of the 5'-end of pre-16S rRNA. The chain is Putative pre-16S rRNA nuclease from Nitrosospira multiformis (strain ATCC 25196 / NCIMB 11849 / C 71).